The primary structure comprises 209 residues: Pyridoxine/pyridoxamine 5'-phosphate oxidase (209 aa).

Residues 7–10 and Lys-64 contribute to the substrate site; that span reads REDY. FMN contacts are provided by residues 59-64, 74-75, Arg-80, and Lys-81; these read RIVLLK and FT. Residues Tyr-121, Arg-125, and Ser-129 each coordinate substrate. Residues 138 to 139 and Trp-182 each bind FMN; that span reads QS. Substrate is bound at residue 188-190; that stretch reads RLH. Position 192 (Arg-192) interacts with FMN.

This sequence belongs to the pyridoxamine 5'-phosphate oxidase family. In terms of assembly, homodimer. It depends on FMN as a cofactor.

The enzyme catalyses pyridoxamine 5'-phosphate + O2 + H2O = pyridoxal 5'-phosphate + H2O2 + NH4(+). The catalysed reaction is pyridoxine 5'-phosphate + O2 = pyridoxal 5'-phosphate + H2O2. Its pathway is cofactor metabolism; pyridoxal 5'-phosphate salvage; pyridoxal 5'-phosphate from pyridoxamine 5'-phosphate: step 1/1. The protein operates within cofactor metabolism; pyridoxal 5'-phosphate salvage; pyridoxal 5'-phosphate from pyridoxine 5'-phosphate: step 1/1. In terms of biological role, catalyzes the oxidation of either pyridoxine 5'-phosphate (PNP) or pyridoxamine 5'-phosphate (PMP) into pyridoxal 5'-phosphate (PLP). The polypeptide is Pyridoxine/pyridoxamine 5'-phosphate oxidase (Actinobacillus pleuropneumoniae serotype 5b (strain L20)).